Reading from the N-terminus, the 156-residue chain is Ribosome maturation factor RimP (156 aa).

This sequence belongs to the RimP family.

It localises to the cytoplasm. Required for maturation of 30S ribosomal subunits. This Prochlorococcus marinus (strain NATL1A) protein is Ribosome maturation factor RimP.